The following is a 260-amino-acid chain: MRSLSRFRLITFDVTNTLLQFRTTPGKQYGEIGALFGARCDNNELAKNFKANWYKMNRDYPNFGRDTNPQMEWQQWWRKLIAGTFAESGAAIPDEKLHNFSNHLIELYKTSICWQPCNGSVELLQQLRKELKPEKCKLGVIANFDPRLPTLLQNTKLDQYLDFAINSYEVQAEKPDPQIFQKAMEKSGLKNLKPEECLHIGDGPTTDYLAAKELGWHSALVHEKSYAYLVKKYGEDIDRDHVFPSLYDFHKKISDGAVVW.

The protein is Rhythmically expressed gene 2 protein (Reg-2) of Drosophila melanogaster (Fruit fly).